A 142-amino-acid chain; its full sequence is Putative pre-16S rRNA nuclease (142 aa).

This sequence belongs to the YqgF nuclease family.

The protein localises to the cytoplasm. Functionally, could be a nuclease involved in processing of the 5'-end of pre-16S rRNA. The sequence is that of Putative pre-16S rRNA nuclease from Staphylococcus carnosus (strain TM300).